Reading from the N-terminus, the 79-residue chain is Centromere protein X (79 aa).

Met1 carries the post-translational modification N-acetylmethionine.

This sequence belongs to the CENP-X/MHF2 family. As to quaternary structure, heterodimer with CENPX, sometimes called MHF; this interaction stabilizes both partners. MHF heterodimers can assemble to form tetrameric structures. MHF also coassemble with CENPT-CENPW heterodimers at centromeres to form the tetrameric CENP-T-W-S-X complex. Forms a discrete complex with FANCM and CENPX, called FANCM-MHF; this interaction, probably mediated by direct binding between CENPS and FANCM, leads to synergistic activation of double-stranded DNA binding and strongly stimulates FANCM-mediated DNA remodeling. Recruited by FANCM to the Fanconi anemia (FA) core complex, which consists of CENPS, CENPX, FANCA, FANCB, FANCC, FANCE, FANCF, FANCG, FANCL, FANCM, FAAP24 and FAAP100. The FA core complex associates with Bloom syndrome (BLM) complex, which consists of at least BLM, DNA topoisomerase 3-alpha (TOP3A), RMI1/BLAP75, RPA1/RPA70 and RPA2/RPA32. The super complex between FA and BLM is called BRAFT.

It localises to the nucleus. It is found in the chromosome. The protein resides in the centromere. Its subcellular location is the kinetochore. Functionally, DNA-binding component of the Fanconi anemia (FA) core complex. Required for the normal activation of the FA pathway, leading to monoubiquitination of the FANCI-FANCD2 complex in response to DNA damage, cellular resistance to DNA cross-linking drugs, and prevention of chromosomal breakage. In complex with CENPS (MHF heterodimer), crucial cofactor for FANCM in both binding and ATP-dependent remodeling of DNA. Stabilizes FANCM. In complex with CENPS and FANCM (but not other FANC proteins), rapidly recruited to blocked forks and promotes gene conversion at blocked replication forks. In complex with CENPS, CENPT and CENPW (CENP-T-W-S-X heterotetramer), involved in the formation of a functional kinetochore outer plate, which is essential for kinetochore-microtubule attachment and faithful mitotic progression. As a component of MHF and CENP-T-W-S-X complexes, binds DNA and bends it to form a nucleosome-like structure. DNA-binding function is fulfilled in the presence of CENPS, with the following preference for DNA substates: Holliday junction &gt; double-stranded &gt; splay arm &gt; single-stranded. Does not bind DNA on its own. The sequence is that of Centromere protein X (CENPX) from Bos taurus (Bovine).